Consider the following 515-residue polypeptide: Meiotically up-regulated gene 68 protein (515 aa).

The disordered stretch occupies residues 165-204; sequence LHSIESERNESSLSLDSGESEKKSEEDNGNGEQNYIPEQY.

Functionally, has a role in meiosis. This is Meiotically up-regulated gene 68 protein (mug68) from Schizosaccharomyces pombe (strain 972 / ATCC 24843) (Fission yeast).